The chain runs to 172 residues: RNA pyrophosphohydrolase (172 aa).

Residues 6 to 149 (GYRPNVGIIL…KRDVYRMALK (144 aa)) enclose the Nudix hydrolase domain. The short motif at 38-59 (GGIKYGESPEQAMYRELMEEVG) is the Nudix box element.

It belongs to the Nudix hydrolase family. RppH subfamily. A divalent metal cation is required as a cofactor.

Accelerates the degradation of transcripts by removing pyrophosphate from the 5'-end of triphosphorylated RNA, leading to a more labile monophosphorylated state that can stimulate subsequent ribonuclease cleavage. The polypeptide is RNA pyrophosphohydrolase (Methylobacillus flagellatus (strain ATCC 51484 / DSM 6875 / VKM B-1610 / KT)).